We begin with the raw amino-acid sequence, 638 residues long: Golgin subfamily A member 8S (638 aa).

The span at 1–11 (MWPQARLPPHP) shows a compositional bias: pro residues. The tract at residues 1–84 (MWPQARLPPH…GESPTSSATL (84 aa)) is disordered. A compositionally biased stretch (polar residues) spans 50-62 (TNGSIHETATSGG). Coiled coils occupy residues 105–160 (VSQL…LNTD), 223–275 (LEQS…MSQE), and 318–417 (EAEL…QQKQ). Disordered stretches follow at residues 427-453 (ALPGEGDGGGHLDSEGEEAPRPIPSIP), 510-532 (KDAALGGGHHQAGAQGGDEDEAA), and 556-575 (AHNPADEPGPGAPAPQELGA). A compositionally biased stretch (basic and acidic residues) spans 434–446 (GGGHLDSEGEEAP). Residues 514-525 (LGGGHHQAGAQG) are compositionally biased toward gly residues. The segment covering 561–574 (DEPGPGAPAPQELG) has biased composition (low complexity).

It belongs to the GOLGA8 family.

In Homo sapiens (Human), this protein is Golgin subfamily A member 8S.